Here is a 620-residue protein sequence, read N- to C-terminus: 1-deoxy-D-xylulose-5-phosphate synthase (620 aa).

Thiamine diphosphate contacts are provided by residues His-80 and 121–123 (GHS). Asp-152 is a Mg(2+) binding site. Thiamine diphosphate-binding positions include 153–154 (GA), Asn-181, Tyr-288, and Glu-370. Asn-181 contacts Mg(2+).

It belongs to the transketolase family. DXPS subfamily. As to quaternary structure, homodimer. Mg(2+) is required as a cofactor. Thiamine diphosphate serves as cofactor.

It carries out the reaction D-glyceraldehyde 3-phosphate + pyruvate + H(+) = 1-deoxy-D-xylulose 5-phosphate + CO2. Its pathway is metabolic intermediate biosynthesis; 1-deoxy-D-xylulose 5-phosphate biosynthesis; 1-deoxy-D-xylulose 5-phosphate from D-glyceraldehyde 3-phosphate and pyruvate: step 1/1. Functionally, catalyzes the acyloin condensation reaction between C atoms 2 and 3 of pyruvate and glyceraldehyde 3-phosphate to yield 1-deoxy-D-xylulose-5-phosphate (DXP). This is 1-deoxy-D-xylulose-5-phosphate synthase from Escherichia coli O139:H28 (strain E24377A / ETEC).